We begin with the raw amino-acid sequence, 83 residues long: Tetracenomycin polyketide synthase acyl carrier protein (83 aa).

Residues 3–83 (QIGLPRLVEI…VNTETAGEVA (81 aa)) enclose the Carrier domain. The residue at position 41 (Ser41) is an O-(pantetheine 4'-phosphoryl)serine.

The tetracenomycin polyketide synthase (TCM PKS) is composed of a ketosynthase complex (TcmKL), an acyl carrier protein (TcmM), a cyclase (TcmN) and a probable second cyclase (TcmJ). It depends on pantetheine 4'-phosphate as a cofactor. In terms of processing, 4'-phosphopantetheine is transferred from CoA to a specific serine of apo-ACP.

The catalysed reaction is 10 malonyl-CoA + 8 H(+) = tetracenomycin F2 + 10 CO2 + 10 CoA + 2 H2O. Its pathway is antibiotic biosynthesis; tetracenomycin C biosynthesis. Functionally, involved in the biosynthesis of tetracenomycin C (TCM C). Part of a type II polyketide synthase (PKS) that catalyzes the synthesis of tetracenomycin F2 (TCM F2), a precursor of TCM C, from malonyl-CoA. TcmM is an acyl carrier protein that serves as an acceptor of malonate from malonyl-CoA and acts as the tether for the substrates and intermediates of polyketide assembly. The malonyl CoA-acyl carrier protein transacylase FabD (MCT) is required to catalyze the transacylation between malonyl-CoA and TcmM, although a relatively slow spontaneous self-malonylation of TcmM also occurs in a reaction without the MCT. The protein is Tetracenomycin polyketide synthase acyl carrier protein of Streptomyces glaucescens.